Reading from the N-terminus, the 580-residue chain is L-aspartate oxidase (580 aa).

FAD is bound by residues 26 to 29, Lys-49, 56 to 63, and Asp-227; these read SGVA and STRWAQGG. The active-site Proton donor/acceptor is Arg-297. FAD is bound by residues Glu-382 and 398 to 399; that span reads SL. The tract at residues 556–580 is disordered; it reads VHTTDTPEFPPTVHGAQPTHRPQEQ.

The protein belongs to the FAD-dependent oxidoreductase 2 family. NadB subfamily. The cofactor is FAD.

It is found in the cytoplasm. The enzyme catalyses L-aspartate + O2 = iminosuccinate + H2O2. The protein operates within cofactor biosynthesis; NAD(+) biosynthesis; iminoaspartate from L-aspartate (oxidase route): step 1/1. Catalyzes the oxidation of L-aspartate to iminoaspartate, the first step in the de novo biosynthesis of NAD(+). The protein is L-aspartate oxidase (nadB) of Streptomyces coelicolor (strain ATCC BAA-471 / A3(2) / M145).